Reading from the N-terminus, the 385-residue chain is Glucans biosynthesis protein C (385 aa).

10 helical membrane-spanning segments follow: residues 17-39 (AWLM…TWHV), 54-76 (FIHS…MLFL), 88-110 (VERV…FIML), 136-158 (LISH…WIFK), 179-198 (LSVI…RTIF), 213-235 (IVMQ…IFPH), 242-261 (TPSR…YLLN), 276-295 (SVIT…SFGH), 308-330 (FVNA…GAYI), and 334-356 (ITSN…IILY).

Belongs to the acyltransferase 3 family. OpgC subfamily.

The protein resides in the cell membrane. It functions in the pathway glycan metabolism; osmoregulated periplasmic glucan (OPG) biosynthesis. Its function is as follows. Necessary for the succinyl substitution of periplasmic glucans. Could catalyze the transfer of succinyl residues from the cytoplasmic side of the membrane to the nascent glucan backbones on the periplasmic side of the membrane. The sequence is that of Glucans biosynthesis protein C from Escherichia coli O157:H7.